The sequence spans 440 residues: Probable exopolygalacturonase C (440 aa).

The signal sequence occupies residues 1 to 21; sequence MLITNPALLGILASLAPLALG. N-linked (GlcNAc...) asparagine glycans are attached at residues Asn24, Asn84, Asn151, and Asn219. 2 PbH1 repeats span residues 217–238 and 240–261; these read GTNI…AVNT and SHNI…SIGS. Residue Asp231 is the Proton donor of the active site. Residue His255 is part of the active site. Asn271 is a glycosylation site (N-linked (GlcNAc...) asparagine). Residues 272 to 293 form a PbH1 3 repeat; that stretch reads ITNLRFEDVTVIDALYAARFKS. N-linked (GlcNAc...) asparagine glycans are attached at residues Asn313 and Asn350. The cysteines at positions 389 and 395 are disulfide-linked. Asn434 carries N-linked (GlcNAc...) asparagine glycosylation.

This sequence belongs to the glycosyl hydrolase 28 family.

Its subcellular location is the secreted. It carries out the reaction [(1-&gt;4)-alpha-D-galacturonosyl](n) + H2O = alpha-D-galacturonate + [(1-&gt;4)-alpha-D-galacturonosyl](n-1). In terms of biological role, specific in hydrolyzing the terminal glycosidic bond of polygalacturonic acid and oligogalacturonates. This Neosartorya fischeri (strain ATCC 1020 / DSM 3700 / CBS 544.65 / FGSC A1164 / JCM 1740 / NRRL 181 / WB 181) (Aspergillus fischerianus) protein is Probable exopolygalacturonase C (pgxC).